The chain runs to 580 residues: DNA ligase 1 (580 aa).

ATP is bound at residue glutamate 245. Residue lysine 247 is the N6-AMP-lysine intermediate of the active site. ATP is bound by residues arginine 252, arginine 267, glutamate 297, phenylalanine 343, arginine 420, and lysine 426.

This sequence belongs to the ATP-dependent DNA ligase family. Mg(2+) serves as cofactor.

The catalysed reaction is ATP + (deoxyribonucleotide)n-3'-hydroxyl + 5'-phospho-(deoxyribonucleotide)m = (deoxyribonucleotide)n+m + AMP + diphosphate.. Its function is as follows. DNA ligase that seals nicks in double-stranded DNA during DNA replication, DNA recombination and DNA repair. In Methanosarcina acetivorans (strain ATCC 35395 / DSM 2834 / JCM 12185 / C2A), this protein is DNA ligase 1.